Consider the following 469-residue polypeptide: Adenosylhomocysteinase (469 aa).

Residues Thr-63, Asp-139, and Glu-164 each coordinate substrate. NAD(+) is bound at residue 165 to 167 (TTT). Residues Lys-194 and Asp-198 each coordinate substrate. Residues Asn-199, 228–233 (GYGDVG), Glu-251, Asn-300, 321–323 (IGH), and Asn-375 each bind NAD(+).

Belongs to the adenosylhomocysteinase family. The cofactor is NAD(+).

The protein localises to the cytoplasm. The enzyme catalyses S-adenosyl-L-homocysteine + H2O = L-homocysteine + adenosine. It participates in amino-acid biosynthesis; L-homocysteine biosynthesis; L-homocysteine from S-adenosyl-L-homocysteine: step 1/1. In terms of biological role, may play a key role in the regulation of the intracellular concentration of adenosylhomocysteine. In Pseudomonas syringae pv. tomato (strain ATCC BAA-871 / DC3000), this protein is Adenosylhomocysteinase.